The chain runs to 402 residues: Probable tRNA sulfurtransferase (402 aa).

The THUMP domain maps to 61–166 (EEIMKRISKV…SDAAYLYSRV (106 aa)). ATP contacts are provided by residues 184–185 (ML), 209–210 (HF), R266, G288, and Q297.

Belongs to the ThiI family.

It is found in the cytoplasm. The catalysed reaction is [ThiI sulfur-carrier protein]-S-sulfanyl-L-cysteine + a uridine in tRNA + 2 reduced [2Fe-2S]-[ferredoxin] + ATP + H(+) = [ThiI sulfur-carrier protein]-L-cysteine + a 4-thiouridine in tRNA + 2 oxidized [2Fe-2S]-[ferredoxin] + AMP + diphosphate. It catalyses the reaction [ThiS sulfur-carrier protein]-C-terminal Gly-Gly-AMP + S-sulfanyl-L-cysteinyl-[cysteine desulfurase] + AH2 = [ThiS sulfur-carrier protein]-C-terminal-Gly-aminoethanethioate + L-cysteinyl-[cysteine desulfurase] + A + AMP + 2 H(+). The protein operates within cofactor biosynthesis; thiamine diphosphate biosynthesis. Functionally, catalyzes the ATP-dependent transfer of a sulfur to tRNA to produce 4-thiouridine in position 8 of tRNAs, which functions as a near-UV photosensor. Also catalyzes the transfer of sulfur to the sulfur carrier protein ThiS, forming ThiS-thiocarboxylate. This is a step in the synthesis of thiazole, in the thiamine biosynthesis pathway. The sulfur is donated as persulfide by IscS. The protein is Probable tRNA sulfurtransferase of Macrococcus caseolyticus (strain JCSC5402) (Macrococcoides caseolyticum).